A 379-amino-acid polypeptide reads, in one-letter code: Probable G-protein coupled receptor No18 (379 aa).

Residues 5 to 36 (EASITGRTAPELNASAAPLDDERELGETVAAT) lie on the Extracellular side of the membrane. Asparagine 17 is a glycosylation site (N-linked (GlcNAc...) asparagine). The helical transmembrane segment at 37–58 (ALLLAIILVTIVGNSLVIISVF) threads the bilayer. The Cytoplasmic segment spans residues 59–68 (TYRPLRSVQN). A helical membrane pass occupies residues 69–90 (FFVVSLAVADLTVALFVLPLNV). At 91-107 (AYRLLNQWLLGSYLCQM) the chain is on the extracellular side. A disulfide bridge connects residues cysteine 105 and cysteine 184. Residues 108 to 128 (WLTCDILCCTSSILNLCVIAL) form a helical membrane-spanning segment. The Cytoplasmic portion of the chain corresponds to 129–148 (DRYWAITDPINYAQKRTIRR). A helical membrane pass occupies residues 149–171 (VNTMIAAVWALSLVISVPPLLGW). Over 172–196 (NDWPAQFTEDTPCTLTQERLFVVYS) the chain is Extracellular. The chain crosses the membrane as a helical span at residues 197-218 (SSGSFFIPLIIMSVVYAKIFFA). Over 219 to 303 (TKRRLRERTR…LSKERKAARV (85 aa)) the chain is Cytoplasmic. The segment at 234-276 (AVPAPPQRTSSRPLAELESVASQEDETEPSPEPEPLSSRADKP) is disordered. A helical membrane pass occupies residues 304–325 (LGVIMGVFVVCWLPFFLMYAIV). The Extracellular segment spans residues 326 to 340 (PFCTNCAPPSQRVVD). Residues 341-362 (FVTWLGYVNSSLNPIIYTIYNK) form a helical membrane-spanning segment. Residues 363 to 375 (DFRTAFSRLLRCD) lie on the Cytoplasmic side of the membrane.

This sequence belongs to the G-protein coupled receptor 1 family.

The protein resides in the cell membrane. Functionally, probable G-protein coupled receptor for an amine. This Amphibalanus amphitrite (Striped barnacle) protein is Probable G-protein coupled receptor No18.